A 203-amino-acid chain; its full sequence is Chemotactic transduction protein ChpE (203 aa).

The next 5 helical transmembrane spans lie at 3 to 23 (AIFLAALLFGFAFNVSPGAVF), 46 to 66 (LIGDAVWALLGLTGLALLLGY), 69 to 89 (VRIPLTLACAAYLAWLGVQGL), 123 to 143 (NVVYWGALGSALAGIVDGTPN), and 149 to 169 (VFFAGFMLSSLIWCFCCAALV).

The protein belongs to the Rht family.

It is found in the cell membrane. This chain is Chemotactic transduction protein ChpE (chpE), found in Pseudomonas aeruginosa (strain ATCC 15692 / DSM 22644 / CIP 104116 / JCM 14847 / LMG 12228 / 1C / PRS 101 / PAO1).